A 388-amino-acid chain; its full sequence is Succinyl-diaminopimelate desuccinylase (388 aa).

Residue H74 participates in Zn(2+) binding. D76 is an active-site residue. D107 is a Zn(2+) binding site. Catalysis depends on E142, which acts as the Proton acceptor. Zn(2+)-binding residues include E143, E171, and H360.

The protein belongs to the peptidase M20A family. DapE subfamily. In terms of assembly, homodimer. The cofactor is Zn(2+). It depends on Co(2+) as a cofactor.

It catalyses the reaction N-succinyl-(2S,6S)-2,6-diaminopimelate + H2O = (2S,6S)-2,6-diaminopimelate + succinate. It functions in the pathway amino-acid biosynthesis; L-lysine biosynthesis via DAP pathway; LL-2,6-diaminopimelate from (S)-tetrahydrodipicolinate (succinylase route): step 3/3. In terms of biological role, catalyzes the hydrolysis of N-succinyl-L,L-diaminopimelic acid (SDAP), forming succinate and LL-2,6-diaminopimelate (DAP), an intermediate involved in the bacterial biosynthesis of lysine and meso-diaminopimelic acid, an essential component of bacterial cell walls. This chain is Succinyl-diaminopimelate desuccinylase, found in Rhodopseudomonas palustris (strain BisB5).